Consider the following 133-residue polypeptide: Profilin-2 (133 aa).

Cysteines 13 and 117 form a disulfide. Positions 83–99 (AVIRGKKGSGGITIKKT) match the Involved in PIP2 interaction motif. Threonine 113 is modified (phosphothreonine).

This sequence belongs to the profilin family. As to quaternary structure, occurs in many kinds of cells as a complex with monomeric actin in a 1:1 ratio. Post-translationally, phosphorylated by MAP kinases.

The protein localises to the cytoplasm. Its subcellular location is the cytoskeleton. In terms of biological role, binds to actin and affects the structure of the cytoskeleton. At high concentrations, profilin prevents the polymerization of actin, whereas it enhances it at low concentrations. This is Profilin-2 from Betula pendula (European white birch).